We begin with the raw amino-acid sequence, 468 residues long: QFPTDYDEGQDDRPKVGLGARGHRPYDKKKEEAPSLRPVPPPISGGGYRARPATATVGQKKVERKPPDADGCLHADPDLGVLCPTGCKLQDTLVRQERPIRKSIEDLRNTVDSVSRTSSSTFQYITLLKNMWKGRQNQVQDNENVVNEYSSHLEKHQLYIDETVKNNIPTKLRVLRSILENLRSKIQKLESDVSTQMEYCRTPCTVTCNIPVVSGKECEKIIRNEGETSEMYLIQPEDSSKPYRVYCDMKTEKGGWTVIQNRQDGSVDFGRKWDPYKQGFGNIATNAEGKKYCGVPGEYWLGNDRISQLTNMGPTKLLIEMEDWKGDKVTALYEGFTVQNEANKYQLSVSKYKGTAGNALIEGASQLVGENRTMTIHNSMFFSTYDRDNDGWKTTDPRKQCSKEDGGGWWYNRCHAANPNGRYYWGGAYTWDMAKHGTDDGVVWMNWQGSWYSMKKMSMKIRPYFPEQ.

Gln-1 carries the pyrrolidone carboxylic acid modification. The span at 1–10 shows a compositional bias: acidic residues; that stretch reads QFPTDYDEGQ. The tract at residues 1-54 is disordered; that stretch reads QFPTDYDEGQDDRPKVGLGARGHRPYDKKKEEAPSLRPVPPPISGGGYRARPAT. O-linked (GalNAc...) threonine glycosylation occurs at Thr-4. Residue Tyr-6 is modified to Sulfotyrosine. Positions 24–34 are enriched in basic and acidic residues; that stretch reads RPYDKKKEEAP. Positions 88-204 form a coiled coil; the sequence is KLQDTLVRQE…TQMEYCRTPC (117 aa). 2 cysteine pairs are disulfide-bonded: Cys-208–Cys-293 and Cys-218–Cys-247. In terms of domain architecture, Fibrinogen C-terminal spans 209–465; sequence NIPVVSGKEC…KMSMKIRPYF (257 aa). N-linked (GlcNAc...) asparagine glycosylation occurs at Asn-371. Cys-401 and Cys-414 are disulfide-bonded.

Heterohexamer; disulfide linked. Contains 2 sets of 3 non-identical chains (alpha, beta and gamma). The 2 heterotrimers are in head to head conformation with the N-termini in a small central domain. Post-translationally, conversion of fibrinogen to fibrin is triggered by thrombin, which cleaves fibrinopeptides A and B from alpha and beta chains, and thus exposes the N-terminal polymerization sites responsible for the formation of the soft clot. The soft clot is converted into the hard clot by factor XIIIA which catalyzes the epsilon-(gamma-glutamyl)lysine cross-linking between gamma chains (stronger) and between alpha chains (weaker) of different monomers. Detected in blood plasma (at protein level).

Its subcellular location is the secreted. Functionally, cleaved by the protease thrombin to yield monomers which, together with fibrinogen alpha (FGA) and fibrinogen gamma (FGG), polymerize to form an insoluble fibrin matrix. Fibrin has a major function in hemostasis as one of the primary components of blood clots. In addition, functions during the early stages of wound repair to stabilize the lesion and guide cell migration during re-epithelialization. Was originally thought to be essential for platelet aggregation, based on in vitro studies using anticoagulated blood. However subsequent studies have shown that it is not absolutely required for thrombus formation in vivo. Enhances expression of SELP in activated platelets. Maternal fibrinogen is essential for successful pregnancy. Fibrin deposition is also associated with infection, where it protects against IFNG-mediated hemorrhage. May also facilitate the antibacterial immune response via both innate and T-cell mediated pathways. The protein is Fibrinogen beta chain (FGB) of Bos taurus (Bovine).